A 257-amino-acid chain; its full sequence is 5-oxoprolinase subunit A (257 aa).

It belongs to the LamB/PxpA family. In terms of assembly, forms a complex composed of PxpA, PxpB and PxpC.

The enzyme catalyses 5-oxo-L-proline + ATP + 2 H2O = L-glutamate + ADP + phosphate + H(+). Its function is as follows. Catalyzes the cleavage of 5-oxoproline to form L-glutamate coupled to the hydrolysis of ATP to ADP and inorganic phosphate. This is 5-oxoprolinase subunit A from Bacillus subtilis (strain 168).